A 347-amino-acid chain; its full sequence is Protein pelota homolog (347 aa).

This sequence belongs to the eukaryotic release factor 1 family. Pelota subfamily. As to quaternary structure, monomer. A divalent metal cation is required as a cofactor.

Its subcellular location is the cytoplasm. In terms of biological role, may function in recognizing stalled ribosomes, interact with stem-loop structures in stalled mRNA molecules, and effect endonucleolytic cleavage of the mRNA. May play a role in the release non-functional ribosomes and degradation of damaged mRNAs. Has endoribonuclease activity. This Methanothrix thermoacetophila (strain DSM 6194 / JCM 14653 / NBRC 101360 / PT) (Methanosaeta thermophila) protein is Protein pelota homolog.